Reading from the N-terminus, the 281-residue chain is 4-deoxy-L-threo-5-hexosulose-uronate ketol-isomerase (281 aa).

Zn(2+) contacts are provided by His-198, His-200, Glu-205, and His-248.

This sequence belongs to the KduI family. Requires Zn(2+) as cofactor.

It carries out the reaction 5-dehydro-4-deoxy-D-glucuronate = 3-deoxy-D-glycero-2,5-hexodiulosonate. It participates in glycan metabolism; pectin degradation; 2-dehydro-3-deoxy-D-gluconate from pectin: step 4/5. In terms of biological role, catalyzes the isomerization of 5-dehydro-4-deoxy-D-glucuronate to 3-deoxy-D-glycero-2,5-hexodiulosonate. In Levilactobacillus brevis (strain ATCC 367 / BCRC 12310 / CIP 105137 / JCM 1170 / LMG 11437 / NCIMB 947 / NCTC 947) (Lactobacillus brevis), this protein is 4-deoxy-L-threo-5-hexosulose-uronate ketol-isomerase.